We begin with the raw amino-acid sequence, 858 residues long: Bifunctional uridylyltransferase/uridylyl-removing enzyme (858 aa).

A uridylyltransferase region spans residues 1-324 (MSASVAEPPP…PATSGVTRVL (324 aa)). The uridylyl-removing stretch occupies residues 325 to 681 (SPGRFVEKQG…ARPSPVGDAL (357 aa)). The region spanning 443 to 565 (VDQHILMVLR…VGSERRLTAL (123 aa)) is the HD domain. ACT domains follow at residues 682 to 761 (QVLV…PEPS) and 790 to 858 (ILSV…AIAV).

Belongs to the GlnD family. It depends on Mg(2+) as a cofactor.

It catalyses the reaction [protein-PII]-L-tyrosine + UTP = [protein-PII]-uridylyl-L-tyrosine + diphosphate. The catalysed reaction is [protein-PII]-uridylyl-L-tyrosine + H2O = [protein-PII]-L-tyrosine + UMP + H(+). Its activity is regulated as follows. Uridylyltransferase (UTase) activity is inhibited by glutamine, while glutamine activates uridylyl-removing (UR) activity. Its function is as follows. Modifies, by uridylylation and deuridylylation, the PII regulatory proteins (GlnB and homologs), in response to the nitrogen status of the cell that GlnD senses through the glutamine level. Under low glutamine levels, catalyzes the conversion of the PII proteins and UTP to PII-UMP and PPi, while under higher glutamine levels, GlnD hydrolyzes PII-UMP to PII and UMP (deuridylylation). Thus, controls uridylylation state and activity of the PII proteins, and plays an important role in the regulation of nitrogen assimilation and metabolism. The protein is Bifunctional uridylyltransferase/uridylyl-removing enzyme of Burkholderia pseudomallei (strain K96243).